Reading from the N-terminus, the 248-residue chain is Small ribosomal subunit protein uS2 (248 aa).

This sequence belongs to the universal ribosomal protein uS2 family.

The protein is Small ribosomal subunit protein uS2 of Leptothrix cholodnii (strain ATCC 51168 / LMG 8142 / SP-6) (Leptothrix discophora (strain SP-6)).